We begin with the raw amino-acid sequence, 4262 residues long: Polyketide synthase PksM (4262 aa).

Residues 1 to 114 form an N-terminal hotdog fold 1 region; that stretch reads MITEQLHISL…ADMHRKEQTA (114 aa). The PKS/mFAS DH 1 domain occupies 1-271; sequence MITEQLHISL…GKSVRNMSAF (271 aa). The active-site Proton acceptor; for dehydratase activity 1 is histidine 18. Positions 129–271 are C-terminal hotdog fold 1; it reads DRILNLDEIY…GKSVRNMSAF (143 aa). Residue aspartate 190 is the Proton donor; for dehydratase activity 1 of the active site. Positions 293–367 constitute a Carrier 1 domain; sequence PAFEMYLRQL…ELAAHLADHY (75 aa). Position 327 is an O-(pantetheine 4'-phosphoryl)serine (serine 327). A Ketosynthase family 3 (KS3) 1 domain is found at 393–831; it reads GEDIAIIGMA…GSNAHLILEE (439 aa). Residues cysteine 569, histidine 704, and histidine 744 each act as for beta-ketoacyl synthase 1 activity in the active site. Residues 1009–1135 are N-terminal hotdog fold 2; the sequence is HPLVHRNTSD…GRAVISDEAE (127 aa). The PKS/mFAS DH 2 domain maps to 1009–1301; it reads HPLVHRNTSD…MRALDGEQHS (293 aa). The Proton acceptor; for dehydratase activity 2 role is filled by histidine 1038. The C-terminal hotdog fold 2 stretch occupies residues 1149–1301; it reads SLDTVTSEQC…MRALDGEQHS (153 aa). The active-site Proton donor; for dehydratase activity 2 is aspartate 1211. The Carrier 2 domain maps to 2188 to 2261; that stretch reads EKSTEYMKKL…ALVEHFIKTK (74 aa). Serine 2222 is modified (O-(pantetheine 4'-phosphoryl)serine). Positions 2275 to 2291 are enriched in polar residues; that stretch reads VQQHTPAESRTQSSQKP. Positions 2275-2313 are disordered; that stretch reads VQQHTPAESRTQSSQKPDQAAKRTRRFRKLGFSGEKETP. The Ketosynthase family 3 (KS3) 2 domain maps to 2319-2734; the sequence is SRDVAVIGIS…GSNAHIILEE (416 aa). Catalysis depends on for beta-ketoacyl synthase 2 activity residues cysteine 2476, histidine 2611, and histidine 2651. A coiled-coil region spans residues 2750–2826; that stretch reads ALIVLSAKNM…DFIENKADSL (77 aa). Residues 3409 to 3486 enclose the Carrier 3 domain; the sequence is SIEKRLEHDL…ELISFFLTDH (78 aa). Serine 3446 carries the O-(pantetheine 4'-phosphoryl)serine modification. The 416-residue stretch at 3529–3944 folds into the Ketosynthase family 3 (KS3) 3 domain; sequence DEPIAIIGMS…GTNAHAVIEE (416 aa). Active-site for beta-ketoacyl synthase 3 activity residues include cysteine 3690, histidine 3825, and histidine 3865. Residues 4004-4033 adopt a coiled-coil conformation; it reads KAMEARLAIVANNQEQLVRKLKEYVEAMKN. The region spanning 4135-4212 is the Carrier 4 domain; the sequence is NGKTHIQKII…ALSDHLALKA (78 aa). An O-(pantetheine 4'-phosphoryl)serine modification is found at serine 4172.

The cofactor is pantetheine 4'-phosphate.

It is found in the cytoplasm. It functions in the pathway antibiotic biosynthesis; bacillaene biosynthesis. In terms of biological role, involved in some intermediate steps for the synthesis of the antibiotic polyketide bacillaene which is involved in secondary metabolism. The sequence is that of Polyketide synthase PksM (pksM) from Bacillus subtilis (strain 168).